The following is a 625-amino-acid chain: tRNA uridine 5-carboxymethylaminomethyl modification enzyme MnmG (625 aa).

Residues 9-14, valine 121, and serine 177 contribute to the FAD site; that span reads GGGHAG. NAD(+) is bound at residue 271 to 285; it reads GPRYCPSIEDKVNRF. FAD is bound at residue glutamine 368.

The protein belongs to the MnmG family. In terms of assembly, homodimer. Heterotetramer of two MnmE and two MnmG subunits. Requires FAD as cofactor.

The protein resides in the cytoplasm. Its function is as follows. NAD-binding protein involved in the addition of a carboxymethylaminomethyl (cmnm) group at the wobble position (U34) of certain tRNAs, forming tRNA-cmnm(5)s(2)U34. The chain is tRNA uridine 5-carboxymethylaminomethyl modification enzyme MnmG from Aliarcobacter butzleri (strain RM4018) (Arcobacter butzleri).